Consider the following 609-residue polypeptide: MATQAIAPMHAAVVHRHHVLPPRRCVRRRGVFVRASAAAAAAAAETDTLSAAFWDYNLLFRSQRDECLDSIPLRVTEGAIPPDFPAGTYYLAGPGIFSDDHGSTVHPLDGHGYLRSFRFRPGDRTIHYSARFVETAAKREESRDGASWRFTHRGPFSVLQGGKKVGNVKVMKNVANTSVLRWGGRLLCLWEGGQPYEVDPRTLETVGPFDLLGLAAADDNKATNASAARRPWLQEAGLDAAARLLRPVLSGVFDMPGKRLLAHYKIDPRRGRLLMVACNAEDMLLPRSHFTFYEFDAHFDLVQKREFVVPDHLMIHDWAFTDTHYILLGNRIKLDIPGSLLALTGTHPMIAALAVDPRRQSTPVYLLPRSPETEAGGRDWSVPIEAPSQMWSVHVGNAFEEANRRGGLDVRLHMSSCSYQWFHFHRMFGYNWHHKKLDPSFMNAAKGKEWLPRLVQVAIELDRTGECRRCSVRRLSDQHARPADFPAINPSYANQRNRFVYAGAASGSRRFLPYFPFDSVVKVDVSDGSARWWSTDGRKFVGEPVFVPTGGGEDGGYVLLVEYAVSKHRCHLVVLDAKKIGTENALVAKLEVPKNLTFPMGFHGFWGDE.

A chloroplast-targeting transit peptide spans 1–34; it reads MATQAIAPMHAAVVHRHHVLPPRRCVRRRGVFVR. His263, His316, His394, and His603 together coordinate Fe cation.

The protein belongs to the carotenoid oxygenase family. It depends on Fe(2+) as a cofactor. Expressed in vascular bundles of roots, leaves, stems and panicles.

The protein resides in the plastid. Its subcellular location is the chloroplast. The enzyme catalyses 9-cis-beta-carotene + O2 = 9-cis-10'-apo-beta-carotenal + beta-ionone. Involved in strigolactones biosynthesis by cleaving asymmetrically a variety of linear and cyclic carotenoids at the 9-10 double bond. Produces one C(13) beta-ionone and the C(27) 10'-apo-beta-carotenal. Strigolactones are hormones that inhibit tillering and shoot branching through the MAX-dependent pathway, contribute to the regulation of shoot architectural response to phosphate-limiting conditions and function as rhizosphere signal that stimulates hyphal branching of arbuscular mycorrhizal fungi and trigger seed germination of root parasitic weeds. Can rescue the phenotype in the Arabidopsis max3 mutant. The polypeptide is Carotenoid cleavage dioxygenase 7, chloroplastic (CCD7) (Oryza sativa subsp. japonica (Rice)).